The chain runs to 299 residues: NAD-dependent protein deacetylase 1 (299 aa).

The Deacetylase sirtuin-type domain maps to Leu15 to Arg292. Residues Gly39–Ser59 and Gln117–Asp120 contribute to the NAD(+) site. His135 serves as the catalytic Proton acceptor. Zn(2+)-binding residues include Cys143, Cys146, Cys194, and Cys197. Residues Gly234–Ser236 and Leu278 each bind NAD(+).

Belongs to the sirtuin family. Class II subfamily. It depends on Zn(2+) as a cofactor.

The protein localises to the cytoplasm. The enzyme catalyses N(6)-acetyl-L-lysyl-[protein] + NAD(+) + H2O = 2''-O-acetyl-ADP-D-ribose + nicotinamide + L-lysyl-[protein]. In terms of biological role, NAD-dependent protein deacetylase which modulates the activities of several enzymes which are inactive in their acetylated form. This Streptomyces coelicolor (strain ATCC BAA-471 / A3(2) / M145) protein is NAD-dependent protein deacetylase 1.